A 227-amino-acid polypeptide reads, in one-letter code: uncharacterized protein (227 aa).

The next 7 helical transmembrane spans lie at Leu-25 to Phe-45, Ala-49 to Ile-69, Thr-80 to Leu-100, Lys-111 to Ala-131, Phe-144 to Ile-164, Pro-165 to Trp-185, and Ala-201 to Leu-221.

It localises to the cell membrane. This is an uncharacterized protein from Neisseria meningitidis serogroup B (strain ATCC BAA-335 / MC58).